A 337-amino-acid chain; its full sequence is Cytoskeleton protein RodZ (337 aa).

Residues 1 to 111 are Cytoplasmic-facing; the sequence is MNTEATHDQN…LGKRRKKRDG (111 aa). The HTH cro/C1-type domain occupies 19 to 71; the sequence is LRNAREQLGLSQQAVAERLCLKVSTVRDIEEDKAPADLASTFLRGYIRSYARL. A DNA-binding region (H-T-H motif) is located at residues 30–49; it reads QQAVAERLCLKVSTVRDIEE. A helical; Signal-anchor for type II membrane protein transmembrane segment spans residues 112-132; it reads WLMTFTWLVLFVVIGLSGAWW. The Periplasmic portion of the chain corresponds to 133–337; sequence WQDHKAQQEE…TLNAEQSPAQ (205 aa). The span at 145-167 shows a compositional bias: polar residues; that stretch reads TMADQSSAELSSNSEQGQSVPLN. The tract at residues 145 to 235 is disordered; sequence TMADQSSAEL…PTAATTPDGA (91 aa). Over residues 168-207 the composition is skewed to low complexity; that stretch reads TSTTTDPATTSTPPASVDTTATNTQTPAVTAPAPAVDPQQ. The segment covering 208–218 has biased composition (polar residues); sequence NAVVSPSQANV. Over residues 219 to 235 the composition is skewed to low complexity; the sequence is DTAATPAPTAATTPDGA.

The protein belongs to the RodZ family.

It is found in the cell inner membrane. Functionally, cytoskeletal protein that is involved in cell-shape control through regulation of the length of the long axis. The chain is Cytoskeleton protein RodZ from Shigella boydii serotype 4 (strain Sb227).